The sequence spans 252 residues: Membrane protein insertase YidC (252 aa).

The first 20 residues, 1–20 (MRKKFGIIVALIALTTLLSG), serve as a signal peptide directing secretion. C21 is lipidated: N-palmitoyl cysteine. A lipid anchor (S-diacylglycerol cysteine) is attached at C21. 5 helical membrane passes run 59–79 (YGLAIIIVTLFVRLLLMPLNV), 129–149 (LAGCLPILVQMPIFVAMYHAI), 160–180 (FLWFQLGSPDYILPILTGLFT), 206–226 (IMLYVMPIMIGVMAFFFPAAL), and 228–248 (LYWVTGNIFMVFQTLLINKPM).

The protein belongs to the OXA1/ALB3/YidC family. Type 2 subfamily.

It is found in the cell membrane. In terms of biological role, required for the insertion and/or proper folding and/or complex formation of integral membrane proteins into the membrane. Involved in integration of membrane proteins that insert both dependently and independently of the Sec translocase complex, as well as at least some lipoproteins. This is Membrane protein insertase YidC from Oceanobacillus iheyensis (strain DSM 14371 / CIP 107618 / JCM 11309 / KCTC 3954 / HTE831).